A 123-amino-acid polypeptide reads, in one-letter code: Histone H2B.1/H2B.2 (123 aa).

A disordered region spans residues 1–30 (MPPKVSGKAAKKAGKAQKNITKGDKKKNRK). Ser-110 is a glycosylation site (O-linked (GlcNAc) serine). Residue Lys-118 forms a Glycyl lysine isopeptide (Lys-Gly) (interchain with G-Cter in ubiquitin) linkage.

This sequence belongs to the histone H2B family. In terms of assembly, the nucleosome is a histone octamer containing two molecules each of H2A, H2B, H3 and H4 assembled in one H3-H4 heterotetramer and two H2A-H2B heterodimers. The octamer wraps approximately 147 bp of DNA. Monoubiquitination of Lys-118 gives a specific tag for epigenetic transcriptional activation and is also prerequisite for histone H3 'Lys-4' and 'Lys-79' methylation. Post-translationally, glcNAcylation at Ser-110 promotes monoubiquitination of Lys-118. It fluctuates in response to extracellular glucose, and associates with transcribed genes.

It is found in the nucleus. The protein resides in the chromosome. In terms of biological role, core component of nucleosome. Nucleosomes wrap and compact DNA into chromatin, limiting DNA accessibility to the cellular machineries which require DNA as a template. Histones thereby play a central role in transcription regulation, DNA repair, DNA replication and chromosomal stability. DNA accessibility is regulated via a complex set of post-translational modifications of histones, also called histone code, and nucleosome remodeling. The sequence is that of Histone H2B.1/H2B.2 from Tigriopus californicus (Marine copepod).